An 859-amino-acid chain; its full sequence is Protein EFR3 homolog (859 aa).

Polar residues predominate over residues 696–714 (RKNDGSGDQWQNDTPNFDS). Residues 696 to 728 (RKNDGSGDQWQNDTPNFDSTDGRESPSGYKTVG) are disordered.

Belongs to the EFR3 family.

The protein is Protein EFR3 homolog of Caenorhabditis elegans.